Here is a 172-residue protein sequence, read N- to C-terminus: Large ribosomal subunit protein uL5 (172 aa).

This sequence belongs to the universal ribosomal protein uL5 family. In terms of assembly, component of the large ribosomal subunit.

The protein localises to the nucleus. It is found in the cytoplasm. Its function is as follows. Component of the ribosome, a large ribonucleoprotein complex responsible for the synthesis of proteins in the cell. The small ribosomal subunit (SSU) binds messenger RNAs (mRNAs) and translates the encoded message by selecting cognate aminoacyl-transfer RNA (tRNA) molecules. The large subunit (LSU) contains the ribosomal catalytic site termed the peptidyl transferase center (PTC), which catalyzes the formation of peptide bonds, thereby polymerizing the amino acids delivered by tRNAs into a polypeptide chain. The nascent polypeptides leave the ribosome through a tunnel in the LSU and interact with protein factors that function in enzymatic processing, targeting, and the membrane insertion of nascent chains at the exit of the ribosomal tunnel. The sequence is that of Large ribosomal subunit protein uL5 (RPL11) from Tetrahymena thermophila.